We begin with the raw amino-acid sequence, 505 residues long: ATP synthase subunit alpha (505 aa).

Position 169-176 (169-176 (GDRKTGKT)) interacts with ATP.

Belongs to the ATPase alpha/beta chains family. As to quaternary structure, F-type ATPases have 2 components, CF(1) - the catalytic core - and CF(0) - the membrane proton channel. CF(1) has five subunits: alpha(3), beta(3), gamma(1), delta(1), epsilon(1). CF(0) has three main subunits: a(1), b(2) and c(9-12). The alpha and beta chains form an alternating ring which encloses part of the gamma chain. CF(1) is attached to CF(0) by a central stalk formed by the gamma and epsilon chains, while a peripheral stalk is formed by the delta and b chains.

It localises to the cell membrane. It catalyses the reaction ATP + H2O + 4 H(+)(in) = ADP + phosphate + 5 H(+)(out). In terms of biological role, produces ATP from ADP in the presence of a proton gradient across the membrane. The alpha chain is a regulatory subunit. This is ATP synthase subunit alpha from Leuconostoc mesenteroides subsp. mesenteroides (strain ATCC 8293 / DSM 20343 / BCRC 11652 / CCM 1803 / JCM 6124 / NCDO 523 / NBRC 100496 / NCIMB 8023 / NCTC 12954 / NRRL B-1118 / 37Y).